The chain runs to 474 residues: Cysteine--tRNA ligase (474 aa).

Cys29 serves as a coordination point for Zn(2+). Residues Ile31–His41 carry the 'HIGH' region motif. Residues Cys215, His240, and Glu244 each coordinate Zn(2+). The short motif at Lys273 to Ser277 is the 'KMSKS' region element. An ATP-binding site is contributed by Lys276.

This sequence belongs to the class-I aminoacyl-tRNA synthetase family. The cofactor is Zn(2+).

Its subcellular location is the cytoplasm. It catalyses the reaction tRNA(Cys) + L-cysteine + ATP = L-cysteinyl-tRNA(Cys) + AMP + diphosphate. This Pyrobaculum aerophilum (strain ATCC 51768 / DSM 7523 / JCM 9630 / CIP 104966 / NBRC 100827 / IM2) protein is Cysteine--tRNA ligase.